The primary structure comprises 189 residues: MAAKQPPPLMKKHSQTDLVSRLKTRKILGVGGEDDDGEVHRSKISQVLGNEIKFAVREPLGLRVWQFVSAVLFSGIAIMALAFPDQLYDAVFDGAQVTSKTPIRLYGGALLSISLIMWNALYTAEKVIIRWTLLTEACYFSVQFLVVTATLAETGLASQGILLLLASRLLFVAISVYYYYQVGRKPKKV.

Residues 1-63 (MAAKQPPPLM…FAVREPLGLR (63 aa)) are Cytoplasmic-facing. Serine 14 carries the post-translational modification Phosphoserine. A helical membrane pass occupies residues 64-84 (VWQFVSAVLFSGIAIMALAFP). Residues 85–108 (DQLYDAVFDGAQVTSKTPIRLYGG) lie on the Extracellular side of the membrane. Residues 109–129 (ALLSISLIMWNALYTAEKVII) form a helical membrane-spanning segment. A topological domain (cytoplasmic) is located at residue arginine 130. The chain crosses the membrane as a helical span at residues 131 to 151 (WTLLTEACYFSVQFLVVTATL). Residues 152–159 (AETGLASQ) lie on the Extracellular side of the membrane. Residues 160–180 (GILLLLASRLLFVAISVYYYY) form a helical membrane-spanning segment. The Cytoplasmic portion of the chain corresponds to 181–189 (QVGRKPKKV).

The protein localises to the membrane. The polypeptide is Tumor protein p53-inducible protein 11 (TP53I11) (Bos taurus (Bovine)).